The following is a 345-amino-acid chain: Magnesium-chelatase 38 kDa subunit (345 aa).

Glycine 35 to serine 42 serves as a coordination point for ATP.

This sequence belongs to the Mg-chelatase subunits D/I family.

It catalyses the reaction protoporphyrin IX + Mg(2+) + ATP + H2O = Mg-protoporphyrin IX + ADP + phosphate + 3 H(+). The protein operates within porphyrin-containing compound metabolism; bacteriochlorophyll biosynthesis. Its function is as follows. Involved in bacteriochlorophyll biosynthesis; introduces a magnesium ion into protoporphyrin IX to yield Mg-protoporphyrin IX. The chain is Magnesium-chelatase 38 kDa subunit (bchI) from Acidiphilium rubrum.